We begin with the raw amino-acid sequence, 464 residues long: 3-isopropylmalate dehydratase large subunit (464 aa).

Residues Cys345, Cys405, and Cys408 each coordinate [4Fe-4S] cluster.

This sequence belongs to the aconitase/IPM isomerase family. LeuC type 1 subfamily. In terms of assembly, heterodimer of LeuC and LeuD. [4Fe-4S] cluster is required as a cofactor.

It carries out the reaction (2R,3S)-3-isopropylmalate = (2S)-2-isopropylmalate. It functions in the pathway amino-acid biosynthesis; L-leucine biosynthesis; L-leucine from 3-methyl-2-oxobutanoate: step 2/4. Functionally, catalyzes the isomerization between 2-isopropylmalate and 3-isopropylmalate, via the formation of 2-isopropylmaleate. This is 3-isopropylmalate dehydratase large subunit from Flavobacterium johnsoniae (strain ATCC 17061 / DSM 2064 / JCM 8514 / BCRC 14874 / CCUG 350202 / NBRC 14942 / NCIMB 11054 / UW101) (Cytophaga johnsonae).